The primary structure comprises 278 residues: HTH-type transcriptional regulator TsaQ1/TsaQ2 (278 aa).

An HTH iclR-type domain is found at 19–80 (VHSLAKGLEI…PRSRKLAMGA (62 aa)). The segment at residues 40 to 59 (NQQLVELTGLPKATVSRLTS) is a DNA-binding region (H-T-H motif). The IclR-ED domain maps to 95 to 266 (LQRIARPHME…VQDIQAEMRA (172 aa)).

In terms of biological role, both copies function as additional regulators for the tsa locus, specifically for tsaT. This Comamonas testosteroni (Pseudomonas testosteroni) protein is HTH-type transcriptional regulator TsaQ1/TsaQ2 (tsaQ1).